A 153-amino-acid chain; its full sequence is Probable trafficking protein particle complex subunit 2 (153 aa).

Belongs to the TRAPP small subunits family. Sedlin subfamily. As to quaternary structure, part of the multisubunit TRAPP (transport protein particle) complex.

The protein resides in the cytoplasm. It is found in the perinuclear region. Its subcellular location is the endoplasmic reticulum. It localises to the golgi apparatus. Its function is as follows. May play a role in vesicular transport from endoplasmic reticulum to Golgi. The protein is Probable trafficking protein particle complex subunit 2 of Nematostella vectensis (Starlet sea anemone).